The sequence spans 372 residues: METKKTLREGYTTGSCAAAATKAALTALITGQVQTDATIRLPIGRVVTFSLASCSFEGETATAAVVKDGGDDPDATHGALIVSTVSWASSPGVHIDGGEGVGRVTKPGLPVPVGEAAINPVPRQMIREAVNEVLAQYGLHRGVKVVISVPGGEEIAKKTLNPRLGIMGGISILGTRGIVVPFSTAAYRASIVQALQVAKANGCRHVVITTGGRSEKYAMQEYPHLPEEAFIEMGDFVGFTLKQCKRLGIKMVSMVGMMGKFSKVAQGVMMVHSKSAPVDFGFLAALAEQAGASSALVAAVRGANTAAQVGDMMQEAGCTKFFELLCEACCRAALNEVGGGLTVATSIYTMNGQRLGKAVQIDGDDETDRRGS.

Belongs to the CbiD family.

The catalysed reaction is Co-precorrin-5B + S-adenosyl-L-methionine = Co-precorrin-6A + S-adenosyl-L-homocysteine. It participates in cofactor biosynthesis; adenosylcobalamin biosynthesis; cob(II)yrinate a,c-diamide from sirohydrochlorin (anaerobic route): step 6/10. Catalyzes the methylation of C-1 in cobalt-precorrin-5B to form cobalt-precorrin-6A. The polypeptide is Cobalt-precorrin-5B C(1)-methyltransferase (Geobacillus kaustophilus (strain HTA426)).